Here is an 819-residue protein sequence, read N- to C-terminus: Lon protease (819 aa).

A compositionally biased stretch (polar residues) spans 1-14 (MNSTNNTDSQNLDP). The segment at 1–41 (MNSTNNTDSQNLDPNASEVEKLLDESAEAEEKTDDHTPPSE) is disordered. A compositionally biased stretch (basic and acidic residues) spans 18–38 (EVEKLLDESAEAEEKTDDHTP). The Lon N-terminal domain maps to 42 to 239 (LFILPLNKRP…KALVLLKKEL (198 aa)). 392-399 (GPPGVGKT) contacts ATP. The 185-residue stretch at 634 to 818 (KTPVGVATGL…DDVFKIAFPG (185 aa)) folds into the Lon proteolytic domain. Residues Ser-724 and Lys-767 contribute to the active site.

The protein belongs to the peptidase S16 family. In terms of assembly, homohexamer. Organized in a ring with a central cavity.

The protein resides in the cytoplasm. It catalyses the reaction Hydrolysis of proteins in presence of ATP.. Functionally, ATP-dependent serine protease that mediates the selective degradation of mutant and abnormal proteins as well as certain short-lived regulatory proteins. Required for cellular homeostasis and for survival from DNA damage and developmental changes induced by stress. Degrades polypeptides processively to yield small peptide fragments that are 5 to 10 amino acids long. Binds to DNA in a double-stranded, site-specific manner. In Chlamydia muridarum (strain MoPn / Nigg), this protein is Lon protease.